A 105-amino-acid chain; its full sequence is Immunoglobulin lambda-like polypeptide 1 (105 aa).

The tract at residues 1-105 (QPKSDPLVTL…EKSVSPAECS (105 aa)) is c region. The Ig-like C1-type domain occupies 6 to 100 (PLVTLFLPSL…EGNTVEKSVS (95 aa)). Cys27 and Cys86 form a disulfide bridge.

Associates non-covalently with VPREB1A. Interacts with SYNV1/HRD1 (via N-terminus); this interaction leads to increased IGLL1 ubiquitination and degradation in pre-B cells, possibly through a lysosomal, not proteasomal, pathway.

It localises to the endoplasmic reticulum. The protein resides in the secreted. In terms of biological role, critical for B-cell development. The protein is Immunoglobulin lambda-like polypeptide 1 (Igll1) of Mus spretus (Western Mediterranean mouse).